The chain runs to 161 residues: Anaerobic nitrite reductase Glb1-2 (161 aa).

Residues 9-158 (AFTEEQEALV…LASAIIAEMK (150 aa)) enclose the Globin domain. The Homodimerization motif lies at 42–46 (EIAPP). 6 residues coordinate heme b: Ser52, Lys66, His70, Lys100, Thr104, and His105. Residues 112 to 124 (PEHFEVTKQALLD) carry the Homodimerization motif.

This sequence belongs to the plant globin family. In terms of assembly, homodimer. Requires heme b as cofactor. As to expression, mainly expressed in root nodules and leaves, and, to a lower extent, in roots, stems, flowers and fruits. Accumulates in mature root nodules.

It catalyses the reaction Fe(III)-heme b-[protein] + nitric oxide + H2O = Fe(II)-heme b-[protein] + nitrite + 2 H(+). Its function is as follows. Phytoglobin that reduces nitrite to nitric oxide (NO) under anoxic conditions (e.g. during flooding or in waterlogged soil) and upon root nodulation. Required for general plant development and during nodulation, especially for the onset of symbiosis. Monitors nitric oxide (NO) levels during early phase of the nitrogen-fixing symbiosis and buffers oxygen in functioning nodules. Necessary for the production of pods. May not function as an oxygen storage or transport protein. Has an unusually high affinity for O(2) through a hexacoordinate heme iron because of a very low dissociation constant. The protein is Anaerobic nitrite reductase Glb1-2 of Lotus japonicus (Lotus corniculatus var. japonicus).